We begin with the raw amino-acid sequence, 138 residues long: Diuretic hormone 1 (138 aa).

A signal peptide spans methionine 1–alanine 19. Residues alanine 20–valine 78 constitute a propeptide that is removed on maturation. An Isoleucine amide modification is found at isoleucine 121. Positions glycine 125–tyrosine 138 are excised as a propeptide.

It belongs to the sauvagine/corticotropin-releasing factor/urotensin I family.

Its subcellular location is the secreted. Functionally, regulation of fluid secretion. In Manduca sexta (Tobacco hawkmoth), this protein is Diuretic hormone 1.